Reading from the N-terminus, the 289-residue chain is UPF0276 protein BP2925 (289 aa).

It belongs to the UPF0276 family.

The polypeptide is UPF0276 protein BP2925 (Bordetella pertussis (strain Tohama I / ATCC BAA-589 / NCTC 13251)).